The sequence spans 388 residues: Na(+)/H(+) antiporter NhaA (388 aa).

The next 11 helical transmembrane spans lie at 14 to 34 (GGII…MGAT), 59 to 79 (MLLW…GLEV), 95 to 115 (AFPV…YLAF), 125 to 145 (GWAI…ALLG), 154 to 174 (IFLM…IALF), 179 to 199 (LSIV…LLNL), 219 to 239 (VLKS…FIPL), 254 to 274 (VLHP…NAGV), 292 to 312 (IIAG…WLAL), 328 to 348 (IMAV…IASL), and 360 to 380 (WAKL…YSWL).

This sequence belongs to the NhaA Na(+)/H(+) (TC 2.A.33) antiporter family.

The protein resides in the cell inner membrane. It carries out the reaction Na(+)(in) + 2 H(+)(out) = Na(+)(out) + 2 H(+)(in). Functionally, na(+)/H(+) antiporter that extrudes sodium in exchange for external protons. The polypeptide is Na(+)/H(+) antiporter NhaA (Salmonella choleraesuis (strain SC-B67)).